A 622-amino-acid chain; its full sequence is Chaperone protein HtpG (622 aa).

Positions 1 to 334 are a; substrate-binding; that stretch reads MKGQETRGFQ…SNDLPLNVSR (334 aa). The interval 335–550 is b; that stretch reads EILQDSRITQ…ADEMSTQMAK (216 aa). Positions 551–622 are c; that stretch reads LFAAAGQQAP…IRRMNQLLTA (72 aa).

Belongs to the heat shock protein 90 family. As to quaternary structure, homodimer.

The protein resides in the cytoplasm. In terms of biological role, molecular chaperone. Has ATPase activity. The sequence is that of Chaperone protein HtpG from Yersinia pestis.